Reading from the N-terminus, the 398-residue chain is Succinate--CoA ligase [ADP-forming] subunit beta (398 aa).

In terms of domain architecture, ATP-grasp spans 9–254 (KAVLREFGVS…ETEEDAKEIE (246 aa)). Residues Lys46, 53 to 55 (GRG), Glu109, Ala112, and Glu117 contribute to the ATP site. Asn209 and Asp223 together coordinate Mg(2+). Residues Asn274 and 331–333 (GIM) each bind substrate.

Belongs to the succinate/malate CoA ligase beta subunit family. As to quaternary structure, heterotetramer of two alpha and two beta subunits. Mg(2+) is required as a cofactor.

It carries out the reaction succinate + ATP + CoA = succinyl-CoA + ADP + phosphate. It catalyses the reaction GTP + succinate + CoA = succinyl-CoA + GDP + phosphate. It participates in carbohydrate metabolism; tricarboxylic acid cycle; succinate from succinyl-CoA (ligase route): step 1/1. Functionally, succinyl-CoA synthetase functions in the citric acid cycle (TCA), coupling the hydrolysis of succinyl-CoA to the synthesis of either ATP or GTP and thus represents the only step of substrate-level phosphorylation in the TCA. The beta subunit provides nucleotide specificity of the enzyme and binds the substrate succinate, while the binding sites for coenzyme A and phosphate are found in the alpha subunit. The polypeptide is Succinate--CoA ligase [ADP-forming] subunit beta (Afipia carboxidovorans (strain ATCC 49405 / DSM 1227 / KCTC 32145 / OM5) (Oligotropha carboxidovorans)).